A 106-amino-acid polypeptide reads, in one-letter code: ATP-dependent Clp protease adapter protein ClpS (106 aa).

Residues 1-22 form a disordered region; that stretch reads MTDEPNQDDPQGPEVEAAKPSL.

The protein belongs to the ClpS family. Binds to the N-terminal domain of the chaperone ClpA.

In terms of biological role, involved in the modulation of the specificity of the ClpAP-mediated ATP-dependent protein degradation. In Halorhodospira halophila (strain DSM 244 / SL1) (Ectothiorhodospira halophila (strain DSM 244 / SL1)), this protein is ATP-dependent Clp protease adapter protein ClpS.